The following is a 194-amino-acid chain: Putative manganese efflux pump MntP (194 aa).

The next 6 membrane-spanning stretches (helical) occupy residues 3–23, 37–57, 65–85, 112–132, 137–157, and 170–190; these read PITTLLIGIAMSTDAFAAAIG, LYVAVIFGVIETATPIAGWLL, IATFDHWIAFGLLGGLGIHMI, LAATALATSIDAAAIGISMAF, IGIVAAVIGLCTFTMVIFGVM, and AEIVGGIILIIVGSTILYEHL.

It belongs to the MntP (TC 9.B.29) family.

It is found in the cell inner membrane. Functionally, probably functions as a manganese efflux pump. The protein is Putative manganese efflux pump MntP of Xylella fastidiosa (strain M23).